A 476-amino-acid polypeptide reads, in one-letter code: Bifunctional protein HldE (476 aa).

The ribokinase stretch occupies residues 1 to 319 (MKVSLPAFEK…RALSVNHGES (319 aa)). Residue 195 to 198 (NMGE) participates in ATP binding. Asp-264 is an active-site residue. Residues 345-476 (MTNGCFDILH…SIIENIMANQ (132 aa)) form a cytidylyltransferase region.

This sequence in the N-terminal section; belongs to the carbohydrate kinase PfkB family. The protein in the C-terminal section; belongs to the cytidylyltransferase family. As to quaternary structure, homodimer.

The catalysed reaction is D-glycero-beta-D-manno-heptose 7-phosphate + ATP = D-glycero-beta-D-manno-heptose 1,7-bisphosphate + ADP + H(+). It catalyses the reaction D-glycero-beta-D-manno-heptose 1-phosphate + ATP + H(+) = ADP-D-glycero-beta-D-manno-heptose + diphosphate. It participates in nucleotide-sugar biosynthesis; ADP-L-glycero-beta-D-manno-heptose biosynthesis; ADP-L-glycero-beta-D-manno-heptose from D-glycero-beta-D-manno-heptose 7-phosphate: step 1/4. Its pathway is nucleotide-sugar biosynthesis; ADP-L-glycero-beta-D-manno-heptose biosynthesis; ADP-L-glycero-beta-D-manno-heptose from D-glycero-beta-D-manno-heptose 7-phosphate: step 3/4. Catalyzes the phosphorylation of D-glycero-D-manno-heptose 7-phosphate at the C-1 position to selectively form D-glycero-beta-D-manno-heptose-1,7-bisphosphate. In terms of biological role, catalyzes the ADP transfer from ATP to D-glycero-beta-D-manno-heptose 1-phosphate, yielding ADP-D-glycero-beta-D-manno-heptose. This is Bifunctional protein HldE from Shewanella sediminis (strain HAW-EB3).